We begin with the raw amino-acid sequence, 472 residues long: Cysteine--tRNA ligase (472 aa).

Cys29 contacts Zn(2+). A 'HIGH' region motif is present at residues Pro31–Asn41. 3 residues coordinate Zn(2+): Cys227, His252, and Glu256. The 'KMSKS' region motif lies at Lys285–Ser289. Lys288 is a binding site for ATP.

The protein belongs to the class-I aminoacyl-tRNA synthetase family. In terms of assembly, monomer. Zn(2+) serves as cofactor.

The protein localises to the cytoplasm. It carries out the reaction tRNA(Cys) + L-cysteine + ATP = L-cysteinyl-tRNA(Cys) + AMP + diphosphate. The sequence is that of Cysteine--tRNA ligase from Bradyrhizobium sp. (strain BTAi1 / ATCC BAA-1182).